Consider the following 306-residue polypeptide: Glutaminase (306 aa).

Substrate contacts are provided by serine 64, asparagine 115, glutamate 159, asparagine 166, tyrosine 190, tyrosine 242, and valine 260.

The protein belongs to the glutaminase family. Homotetramer.

It catalyses the reaction L-glutamine + H2O = L-glutamate + NH4(+). The sequence is that of Glutaminase from Vibrio atlanticus (strain LGP32) (Vibrio splendidus (strain Mel32)).